The primary structure comprises 812 residues: Probable E3 ubiquitin-protein ligase hulA (812 aa).

The C2 domain maps to 1-109; the sequence is MTCSQPNLRV…QMGGDEMLTR (109 aa). 2 disordered regions span residues 131–235 and 250–350; these read NLST…WERR and RTTT…YFVD. Composition is skewed to polar residues over residues 148–165, 174–199, 214–223, and 250–267; these read MQPSTSSGLVPQVSASTP, ADPTASNPSLHPQRVPSTTRPSSTIV, SRTNLSSFED, and RTTTWTRPSNNYNEQTSR. A WW 1 domain is found at 226–259; that stretch reads GRLPAGWERREDNLGRTYYVDHNTRTTTWTRPSN. The span at 276-291 shows a compositional bias: basic and acidic residues; sequence LERRAHQSRMLPEDRT. The span at 292–306 shows a compositional bias: polar residues; the sequence is GASSPNLQENQQQAQ. A compositionally biased stretch (low complexity) spans 307-330; it reads TPPAGGSASAVSMMATGATTAGTG. WW domains are found at residues 330 to 363 and 390 to 423; these read GELPPGWEQRTTPEGRPYFVDHNTRTTTWVDPRR and GPLPSGWEMRLTNTARVYFVDHNTKTTTWDDPRL. One can recognise an HECT domain in the interval 479-812; sequence SASDLKKRLM…VEETLGFGQE (334 aa). Residue C780 is the Glycyl thioester intermediate of the active site.

This sequence belongs to the RSP5/NEDD4 family. Interacts with creD.

The protein resides in the cytoplasm. It carries out the reaction S-ubiquitinyl-[E2 ubiquitin-conjugating enzyme]-L-cysteine + [acceptor protein]-L-lysine = [E2 ubiquitin-conjugating enzyme]-L-cysteine + N(6)-ubiquitinyl-[acceptor protein]-L-lysine.. Its pathway is protein modification; protein ubiquitination. Its function is as follows. E3 ubiquitin-protein ligase which accepts ubiquitin from an E2 ubiquitin-conjugating enzyme in the form of a thioester and then directly transfers the ubiquitin to targeted substrates. Probably involved in the regulatory network controlling carbon source utilization. In Aspergillus flavus (strain ATCC 200026 / FGSC A1120 / IAM 13836 / NRRL 3357 / JCM 12722 / SRRC 167), this protein is Probable E3 ubiquitin-protein ligase hulA (hulA).